The primary structure comprises 573 residues: uncharacterized protein (573 aa).

The ABC transmembrane type-1 domain occupies 15–298 (AGIALILMLT…FPFLIMIFTR (284 aa)). Helical transmembrane passes span 17 to 37 (IALI…LLIA), 52 to 72 (VWIW…AGML), 127 to 147 (IFMS…GIVL), 153 to 173 (VKLG…LLWV), 238 to 258 (FTMP…LWAG), and 275 to 295 (IINY…LIMI). The ABC transporter domain maps to 330 to 563 (IEFQHVSFRY…SQLYKRIYES (234 aa)). ATP is bound at residue 364-371 (GATGSGKS).

The protein belongs to the ABC transporter superfamily.

It localises to the cell membrane. This is an uncharacterized protein from Bacillus subtilis (strain 168).